Consider the following 140-residue polypeptide: Gonadotropin subunit beta-2 (140 aa).

The N-terminal stretch at 1 to 24 is a signal peptide; sequence MSVYPECTWLLFVCLCHLLVSAGG. 6 disulfide bridges follow: Cys-30-Cys-78, Cys-44-Cys-93, Cys-47-Cys-131, Cys-55-Cys-109, Cys-59-Cys-111, and Cys-114-Cys-121. The N-linked (GlcNAc...) asparagine glycan is linked to Asn-34.

The protein belongs to the glycoprotein hormones subunit beta family. As to quaternary structure, heterodimer of an alpha and a beta chain.

Its subcellular location is the secreted. Its function is as follows. Involved in gametogenesis and steroidogenesis. This is Gonadotropin subunit beta-2 (cgbb) from Anguilla anguilla (European freshwater eel).